The following is a 122-amino-acid chain: Large ribosomal subunit protein uL18 (122 aa).

Belongs to the universal ribosomal protein uL18 family. Part of the 50S ribosomal subunit; part of the 5S rRNA/L5/L18/L25 subcomplex. Contacts the 5S and 23S rRNAs.

Its function is as follows. This is one of the proteins that bind and probably mediate the attachment of the 5S RNA into the large ribosomal subunit, where it forms part of the central protuberance. In Thermosipho melanesiensis (strain DSM 12029 / CIP 104789 / BI429), this protein is Large ribosomal subunit protein uL18.